A 1401-amino-acid chain; its full sequence is Alpha-latrotoxin-Lt1a (1401 aa).

The signal sequence occupies residues 1–20 (MISVGEIMERANHSLVRMRR). A furin-like endopeptidase recognition region region spans residues 17-20 (RMRR). The helix H8 is the probable transmembrane region of the tetrameric pore inserted in the target cell membrane stretch occupies residues 238 to 257 (VLYALLYGTQTYVSVMFFLL). A disulfide bridge links cysteine 413 with cysteine 1066. ANK repeat units follow at residues 458–489 (LYNA…ATFD), 490–521 (HGRT…ELNQ), 525–554 (KGYT…SINS), 559–589 (FLQT…NINE), 593–622 (DGFT…DVNA), 626–656 (TGLT…DINA), 660–690 (NNIT…NANV), 695–723 (GLLS…NVNV), 729–758 (GGIT…NIEQ), 762–791 (EKYT…NFEA), 795–824 (SGAT…NWRD), 828–857 (NGQM…TVVD), 862–891 (NSDT…DINT), 895–924 (KGLA…NVYI), 928–957 (DGMN…KFEW), 971–1003 (EECA…GNFA), 1004–1033 (ICGP…SVDG), 1035–1064 (KTDT…KVNH), 1068–1097 (NGMT…DFRR), 1101–1131 (RGTT…DINI), 1137–1166 (DKDT…DVTI), and 1170–1199 (YDKT…KFRR). The interval 1026-1032 (EEFLSVD) is 4C4.1 epitope. Positions 1196–1199 (KFRR) are furin-like endopeptidase recognition region. The propeptide occupies 1200–1401 (EYKSSYGERS…SDGILTKKLM (202 aa)).

This sequence belongs to the cationic peptide 01 (latrotoxin) family. 03 (alpha-latrotoxin) subfamily. Homotetramer in membranes. Post-translationally, processed by furin-like proteases at both the N- and C-termini. Expressed in venom gland, cephalothorax, and abdomen tissues from both males and females.

It localises to the secreted. The protein resides in the target cell membrane. Its function is as follows. Presynaptic neurotoxin that causes massive release of neurotransmitters from vertebrate (but not invertebrate) nerve terminals and endocrine cells via a complex mechanism involving activation of receptor(s) and toxin insertion into the plasma membrane with subsequent pore formation. Binds to neurexin-1-alpha (NRXN1) in a calcium dependent manner, adhesion G protein-coupled receptor L1 (ADGRL1, also termed latrophilin-1 and calcium-independent receptor of latrotoxin (CIRL)), and receptor-type tyrosine-protein phosphatase S (PTPRS), also termed PTP sigma. NRXN1 and PTPRS are suggested to provide a platform for binding and subsequent pore formation events. In contrast, binding to ADGRL1 does not involve oligomerization and channel formation, but direct downstream stimulation of the synaptic fusion machinery. The sequence is that of Alpha-latrotoxin-Lt1a from Latrodectus tredecimguttatus (Mediterranean black widow spider).